Consider the following 165-residue polypeptide: Large ribosomal subunit protein uL10 (165 aa).

The protein belongs to the universal ribosomal protein uL10 family. Part of the ribosomal stalk of the 50S ribosomal subunit. The N-terminus interacts with L11 and the large rRNA to form the base of the stalk. The C-terminus forms an elongated spine to which L12 dimers bind in a sequential fashion forming a multimeric L10(L12)X complex.

In terms of biological role, forms part of the ribosomal stalk, playing a central role in the interaction of the ribosome with GTP-bound translation factors. The protein is Large ribosomal subunit protein uL10 of Burkholderia thailandensis (strain ATCC 700388 / DSM 13276 / CCUG 48851 / CIP 106301 / E264).